The primary structure comprises 103 residues: UPF0122 protein FN1394 (103 aa).

Belongs to the UPF0122 family.

Its function is as follows. Might take part in the signal recognition particle (SRP) pathway. This is inferred from the conservation of its genetic proximity to ftsY/ffh. May be a regulatory protein. In Fusobacterium nucleatum subsp. nucleatum (strain ATCC 25586 / DSM 15643 / BCRC 10681 / CIP 101130 / JCM 8532 / KCTC 2640 / LMG 13131 / VPI 4355), this protein is UPF0122 protein FN1394.